The sequence spans 209 residues: Small ribosomal subunit protein uS4 (209 aa).

A disordered region spans residues 22-45; it reads RGRNPLLRKPNPPGQHGMQRKKKS. One can recognise an S4 RNA-binding domain in the interval 93–154; the sequence is CRLDNIVYRL…KSKRLAIVTE (62 aa).

This sequence belongs to the universal ribosomal protein uS4 family. As to quaternary structure, part of the 30S ribosomal subunit. Contacts protein S5. The interaction surface between S4 and S5 is involved in control of translational fidelity.

Its function is as follows. One of the primary rRNA binding proteins, it binds directly to 16S rRNA where it nucleates assembly of the body of the 30S subunit. With S5 and S12 plays an important role in translational accuracy. This chain is Small ribosomal subunit protein uS4, found in Chlamydia trachomatis serovar A (strain ATCC VR-571B / DSM 19440 / HAR-13).